The sequence spans 260 residues: Intermembrane phospholipid transport system permease protein MlaE (260 aa).

The Cytoplasmic segment spans residues 1-50; that stretch reads MLLNALASLGHKGIKTLRTFGRAGLMLFNALVGKPEFRKHAPLLVRQLYN. The chain crosses the membrane as a helical span at residues 51–71; it reads VGVLSMLIIVVSGVFIGMVLG. At 72–88 the chain is on the periplasmic side; the sequence is LQGYLVLTTYSAETSLG. A helical transmembrane segment spans residues 89–109; the sequence is MLVALSLLRELGPVVAALLFA. The Cytoplasmic segment spans residues 110-147; it reads GRAGSALTAEIGLMRATEQLSSMEMMAVDPLRRVISPR. Residues 148–168 traverse the membrane as a helical segment; it reads FWAGVISLPLLTVIFVAVGIW. Residues 169 to 198 lie on the Periplasmic side of the membrane; that stretch reads GGSLVGVSWKGIDSGFFWSAMQNAVDWRMD. Residues 199–219 traverse the membrane as a helical segment; that stretch reads LVNCLIKSVVFAITVTWISLF. The Cytoplasmic portion of the chain corresponds to 220–238; that stretch reads NGYDAIPTSAGISRATTRT. The helical transmembrane segment at 239 to 259 threads the bilayer; sequence VVHSSLAVLGLDFVLTALMFG. Position 260 (asparagine 260) is a topological domain, periplasmic.

Belongs to the MlaE permease family. As to quaternary structure, the complex is composed of two ATP-binding proteins (MlaF), two transmembrane proteins (MlaE), two cytoplasmic solute-binding proteins (MlaB) and six periplasmic solute-binding proteins (MlaD).

It is found in the cell inner membrane. Functionally, part of the ABC transporter complex MlaFEDB, which is involved in a phospholipid transport pathway that maintains lipid asymmetry in the outer membrane by retrograde trafficking of phospholipids from the outer membrane to the inner membrane. Probably responsible for the translocation of the substrate across the membrane. The sequence is that of Intermembrane phospholipid transport system permease protein MlaE from Escherichia coli O157:H7.